The primary structure comprises 401 residues: Lipid-A-disaccharide synthase (401 aa).

This sequence belongs to the LpxB family.

It catalyses the reaction a lipid X + a UDP-2-N,3-O-bis[(3R)-3-hydroxyacyl]-alpha-D-glucosamine = a lipid A disaccharide + UDP + H(+). It participates in bacterial outer membrane biogenesis; LPS lipid A biosynthesis. Its function is as follows. Condensation of UDP-2,3-diacylglucosamine and 2,3-diacylglucosamine-1-phosphate to form lipid A disaccharide, a precursor of lipid A, a phosphorylated glycolipid that anchors the lipopolysaccharide to the outer membrane of the cell. This is Lipid-A-disaccharide synthase from Rhodospirillum centenum (strain ATCC 51521 / SW).